We begin with the raw amino-acid sequence, 205 residues long: MTMQFLIASNVLLWLALIGCAVLMLGLLRQVGLLHERSSPMGAMITDHGPDVGDAAPTFDLPDHSGAMVRIGGPSALKRPTLLMFTAPTCPVCDKLFPLIKSIARAEKFSVVMISDGQPDEHQRFLAKHELGDIRYVVSAEVGMAFQVGKIPYGVLLDPEGVIRAKGLTNTREHLESLLEADKSGFASIQQFMTSRKHSHDAKAA.

A helical transmembrane segment spans residues 5 to 25; that stretch reads FLIASNVLLWLALIGCAVLML. A Thioredoxin domain is found at 50–184; it reads PDVGDAAPTF…LESLLEADKS (135 aa).

It is found in the membrane. The protein operates within one-carbon metabolism; methylamine degradation. Its function is as follows. May be specifically involved in the processing, transport, and/or maturation of the MADH beta-subunit. This chain is Methylamine utilization protein MauD (mauD), found in Methylorubrum extorquens (strain ATCC 14718 / DSM 1338 / JCM 2805 / NCIMB 9133 / AM1) (Methylobacterium extorquens).